The sequence spans 286 residues: Polyamine aminopropyltransferase (286 aa).

One can recognise a PABS domain in the interval 5 to 238 (PLWHETLHDH…GIMTFAWASD (234 aa)). Gln-33 is an S-methyl-5'-thioadenosine binding site. Residues His-64 and Asp-88 each contribute to the spermidine site. Residues Glu-108 and 140-141 (DG) contribute to the S-methyl-5'-thioadenosine site. Catalysis depends on Asp-158, which acts as the Proton acceptor. Spermidine is bound at residue 158 to 161 (DCTD). Residue Pro-165 participates in S-methyl-5'-thioadenosine binding.

It belongs to the spermidine/spermine synthase family. Homodimer or homotetramer.

It is found in the cytoplasm. It catalyses the reaction S-adenosyl 3-(methylsulfanyl)propylamine + putrescine = S-methyl-5'-thioadenosine + spermidine + H(+). It functions in the pathway amine and polyamine biosynthesis; spermidine biosynthesis; spermidine from putrescine: step 1/1. In terms of biological role, catalyzes the irreversible transfer of a propylamine group from the amino donor S-adenosylmethioninamine (decarboxy-AdoMet) to putrescine (1,4-diaminobutane) to yield spermidine. The chain is Polyamine aminopropyltransferase from Klebsiella pneumoniae subsp. pneumoniae (strain ATCC 700721 / MGH 78578).